A 103-amino-acid polypeptide reads, in one-letter code: Large ribosomal subunit protein bL21 (103 aa).

This sequence belongs to the bacterial ribosomal protein bL21 family. As to quaternary structure, part of the 50S ribosomal subunit. Contacts protein L20.

Functionally, this protein binds to 23S rRNA in the presence of protein L20. The protein is Large ribosomal subunit protein bL21 of Nitrosospira multiformis (strain ATCC 25196 / NCIMB 11849 / C 71).